A 596-amino-acid chain; its full sequence is 3-hydroxy-3-methylglutaryl-coenzyme A reductase 1 (596 aa).

Residues 1-29 (MDVRRRPVKPLYTSKDASAGEPLKQQEVS) are disordered. Transmembrane regions (helical) follow at residues 41 to 61 (LYLTNGLFFTMFFSVMYFLLV) and 83 to 103 (AMVSLIASVIYLLGFFGIGFV). The segment at 104–183 (QSFVSRSNSD…SPIIMPALSE (80 aa)) is linker. The catalytic stretch occupies residues 184–596 (DDEEIIQSVV…YNRSIKDISK (413 aa)). E278 (charge relay system) is an active-site residue. Residue N342 is glycosylated (N-linked (GlcNAc...) asparagine). The active-site Charge relay system is the K410. Residue N455 is glycosylated (N-linked (GlcNAc...) asparagine). D486 acts as the Charge relay system in catalysis. H584 functions as the Proton donor in the catalytic mechanism. N588 carries N-linked (GlcNAc...) asparagine glycosylation.

Belongs to the HMG-CoA reductase family. Expressed in flower primordia and anthers.

The protein resides in the endoplasmic reticulum membrane. It catalyses the reaction (R)-mevalonate + 2 NADP(+) + CoA = (3S)-3-hydroxy-3-methylglutaryl-CoA + 2 NADPH + 2 H(+). Its pathway is metabolic intermediate biosynthesis; (R)-mevalonate biosynthesis; (R)-mevalonate from acetyl-CoA: step 3/3. In terms of biological role, catalyzes the synthesis of mevalonate. The specific precursor of all isoprenoid compounds present in plants. This Solanum tuberosum (Potato) protein is 3-hydroxy-3-methylglutaryl-coenzyme A reductase 1 (HMG1).